We begin with the raw amino-acid sequence, 346 residues long: Histone H1.8 (346 aa).

2 stretches are compositionally biased toward low complexity: residues 1–23 (MAPG…SSRS) and 38–48 (PGGPSHSSLPV). 2 disordered regions span residues 1 to 50 (MAPG…PVGR) and 121 to 346 (ATGS…RAEA). Positions 51-129 (RHPPVLRMVL…GATGSFKLVP (79 aa)) constitute an H15 domain. Residues 128 to 137 (VPKHKKKIQP) are compositionally biased toward basic residues. Residues 148–167 (RAGEAKGKGPKKPSEAKEDP) are compositionally biased toward basic and acidic residues. The Nuclear localization signal signature appears at 164 to 179 (KEDPPNVGKVKKAAKR). A compositionally biased stretch (basic residues) spans 172 to 182 (KVKKAAKRPAK). Basic and acidic residues-rich tracts occupy residues 205 to 225 (KDTR…DKAM) and 251 to 262 (EAYRKTKAESKS). Positions 278–288 (TKKKVVAKAKA) are enriched in basic residues. Residues 298 to 309 (KAAAPAKGSGSK) are compositionally biased toward low complexity. Polar residues predominate over residues 334-346 (ASSSKVSSQRAEA).

The protein belongs to the histone H1/H5 family. Oocyte-specific.

Its subcellular location is the cytoplasm. The protein resides in the nucleus. It is found in the chromosome. May play a key role in the control of gene expression during oogenesis and early embryogenesis, presumably through the perturbation of chromatin structure. Essential for meiotic maturation of germinal vesicle-stage oocytes. The somatic type linker histone H1c is rapidly replaced by H1oo in a donor nucleus transplanted into an oocyte. The greater mobility of H1oo as compared to H1c may contribute to this rapid replacement and increased instability of the embryonic chromatin structure. The rapid replacement of H1c with H1oo may play an important role in nuclear remodeling. This Homo sapiens (Human) protein is Histone H1.8.